Reading from the N-terminus, the 359-residue chain is Type-1 angiotensin II receptor (359 aa).

Topologically, residues 1–25 (MILNSSTEDGIKRIQDDCPKAGRHN) are extracellular. A glycan (N-linked (GlcNAc...) asparagine) is linked at Asn-4. Angiotensin II is bound by residues Gln-15 and Asp-17. 2 cysteine pairs are disulfide-bonded: Cys-18-Cys-274 and Cys-101-Cys-180. Residues 26 to 55 (YIFVMIPTLYSIIFVVGIFGNSLVVIVIYF) form a helical membrane-spanning segment. The Cytoplasmic segment spans residues 56–61 (YMKLKT). A helical membrane pass occupies residues 62–89 (VASVFLLNLALADLCFLLTLPLWAVYTA). The Extracellular portion of the chain corresponds to 90–98 (MEYRWPFGN). A helical membrane pass occupies residues 99–125 (YLCKIASASVSFNLYASVFLLTCLSID). Residues 126–141 (RYVAIVHPMKSPVRRT) are Cytoplasmic-facing. A helical membrane pass occupies residues 142–165 (MLMAKVTCIIIWLLAGLASLPTII). The Extracellular segment spans residues 166 to 190 (HRNVFFIENTNITVCAFHYESQNST). Arg-167 is a binding site for angiotensin II. The N-linked (GlcNAc...) asparagine glycan is linked to Asn-176. Angiotensin II-binding residues include Phe-182, His-183, and Tyr-184. An N-linked (GlcNAc...) asparagine glycan is attached at Asn-188. Residues 191–216 (LPIGLGLTKNILGFLFPFLIILTSYT) form a helical membrane-spanning segment. Lys-199 lines the angiotensin II pocket. At 217–239 (LIWKTLKRAYEIQKNKPRNDDIF) the chain is on the cytoplasmic side. A helical transmembrane segment spans residues 240–268 (KIIMAIVLFFFFSWVPHQIFTFLDVLIQL). Over 269 to 278 (GIIHDCKIAD) the chain is Extracellular. A helical transmembrane segment spans residues 279 to 304 (IVDTAMPITICIAYFNNCLNPLFYGF). The Cytoplasmic portion of the chain corresponds to 305–359 (LGKKFKKYFLQLLKYIPPKAKSHSSLSTKMSTLSYRPSDHGNASTKKSASCVEVE). Polar residues predominate over residues 335–352 (STLSYRPSDHGNASTKKS). Residues 335 to 359 (STLSYRPSDHGNASTKKSASCVEVE) are disordered. The S-palmitoyl cysteine moiety is linked to residue Cys-355.

It belongs to the G-protein coupled receptor 1 family. In terms of assembly, interacts with MAS1. Interacts with ARRB1. Interacts with FLNA (via filamin repeat 21); increases PKA-mediated phosphorylation of FLNA. Post-translationally, C-terminal Ser or Thr residues may be phosphorylated. In terms of tissue distribution, adrenal, liver, aorta, kidney, lung, testis and heart.

Its subcellular location is the cell membrane. In terms of biological role, receptor for angiotensin II, a vasoconstricting peptide, which acts as a key regulator of blood pressure and sodium retention by the kidney. The activated receptor in turn couples to G-alpha proteins G(q) (GNAQ, GNA11, GNA14 or GNA15) and thus activates phospholipase C and increases the cytosolic Ca(2+) concentrations, which in turn triggers cellular responses such as stimulation of protein kinase C. This is Type-1 angiotensin II receptor (AGTR1) from Canis lupus familiaris (Dog).